The sequence spans 349 residues: Phosphoribosylformylglycinamidine cyclo-ligase (349 aa).

Belongs to the AIR synthase family.

The protein localises to the cytoplasm. The enzyme catalyses 2-formamido-N(1)-(5-O-phospho-beta-D-ribosyl)acetamidine + ATP = 5-amino-1-(5-phospho-beta-D-ribosyl)imidazole + ADP + phosphate + H(+). It participates in purine metabolism; IMP biosynthesis via de novo pathway; 5-amino-1-(5-phospho-D-ribosyl)imidazole from N(2)-formyl-N(1)-(5-phospho-D-ribosyl)glycinamide: step 2/2. The protein is Phosphoribosylformylglycinamidine cyclo-ligase of Lactobacillus helveticus (strain DPC 4571).